The chain runs to 523 residues: Probable E3 ubiquitin-protein ligase ZFP1 (523 aa).

Basic and acidic residues predominate over residues 18–28 (EQGHSHIHSES). The disordered stretch occupies residues 18–43 (EQGHSHIHSESFNRTGNDSSDQGAQH). Positions 29–40 (FNRTGNDSSDQG) are enriched in polar residues. An RING-type; atypical zinc finger spans residues 471 to 512 (CIICQEEYQVKECIGTLDCGHRYHEDCIKQWLMVKNLCPICK).

Belongs to the RING-type zinc finger family. As to quaternary structure, interacts with DJA6.

It catalyses the reaction S-ubiquitinyl-[E2 ubiquitin-conjugating enzyme]-L-cysteine + [acceptor protein]-L-lysine = [E2 ubiquitin-conjugating enzyme]-L-cysteine + N(6)-ubiquitinyl-[acceptor protein]-L-lysine.. It participates in protein modification; protein ubiquitination. Probable E3 ubiquitin-protein ligase. In Oryza sativa subsp. japonica (Rice), this protein is Probable E3 ubiquitin-protein ligase ZFP1.